Here is a 337-residue protein sequence, read N- to C-terminus: Undecaprenyl-phosphate 4-deoxy-4-formamido-L-arabinose transferase (337 aa).

The next 2 helical transmembrane spans lie at 235–255 (LSIIGFSMALLGVLFAALLII) and 270–290 (FVLFAVLFVFTGGQFIGMGLL).

Belongs to the glycosyltransferase 2 family.

It localises to the cell inner membrane. It carries out the reaction UDP-4-deoxy-4-formamido-beta-L-arabinose + di-trans,octa-cis-undecaprenyl phosphate = 4-deoxy-4-formamido-alpha-L-arabinopyranosyl di-trans,octa-cis-undecaprenyl phosphate + UDP. The protein operates within glycolipid biosynthesis; 4-amino-4-deoxy-alpha-L-arabinose undecaprenyl phosphate biosynthesis; 4-amino-4-deoxy-alpha-L-arabinose undecaprenyl phosphate from UDP-4-deoxy-4-formamido-beta-L-arabinose and undecaprenyl phosphate: step 1/2. It functions in the pathway bacterial outer membrane biogenesis; lipopolysaccharide biosynthesis. Functionally, catalyzes the transfer of 4-deoxy-4-formamido-L-arabinose from UDP to undecaprenyl phosphate. The modified arabinose is attached to lipid A and is required for resistance to polymyxin and cationic antimicrobial peptides. This chain is Undecaprenyl-phosphate 4-deoxy-4-formamido-L-arabinose transferase, found in Pseudomonas savastanoi pv. phaseolicola (strain 1448A / Race 6) (Pseudomonas syringae pv. phaseolicola (strain 1448A / Race 6)).